Reading from the N-terminus, the 1047-residue chain is MGAAKKPAAAGVSTKAEREADLVMETNNSSIVSKRSVELLYYPKPHFFRYFVKRPPRRSPLINRGYWLRMHAMAESVRQFMKQPSDKPKFVLNLGCGFDPLPFILLSTDKSLCSTTRFVDIDYEKLMVNKKTAIRRTDEITRLLENVEFLSDESPIQIRSEQYLAIGCDLKNLKKLDDVLKTELLPSDCSILFLAEVSLTYMDVKSANAVLAWASKLNNDSQFCILEQFFPDGPNHPFASTMMKHFNKLGAPLYSIHEYRSLSEQEQRFRNAGWAHAQARSLWDLWSDNEFVGSSLRAWLDTVEPFDEWEEFALFASHYFLLVASTKPQTMVQELQKTPALTTEPDISSQYVLLAGNNPRGGQRRFGALIPDSENSMGHHSGLGRQTRDVSTDLYSTCKGMTTPQLPFPPREVSARMCHTVTSLRGGDCLLVGGRASPANAFQDCWLRQGKQWQSTKSLPAPRFRHSAVKITLETDSESVLVYGGKSSDGSIFDTWLLWQTHSNGWQEVEIQGARPPARFGACLESINQTTGVLFGGIGSDGIIIEDFWIWKIRHRSDGTVFLELTDHTEHLQQTPLSQYIYRFGSTVTRTSRGLVIVGGIIPRQIVPYECEIMLLDVGELLEYVENESSWGHRILSAIGLGGILQGARPLLVGHVACAIDPDQVLILGGGAVCFSFGTFWTEGGWVLKPAGSTAQNNWTLVPEAMHTPEPVASPKTPQISTALKLSSIRRIRVDTSEQFQQILADGKPVIIEGSDIGPCTELWTKEYLTDVVGSDRKVVVHESQSENMNFQAKNFSYVTKAFGDFLDEVHAGGRQYLRSISAELPSKLPANLAADFPGLKDDFKLPQALSLVTENAHSSPLRISGPVTMWLHYDVSSNTKQEGWKLRVADRYAQVMANVLCQIRGERRLVLFPPADVQYLQVPPGASSSTIDIFQNIKDGSIVSIPHTSPQEAVLNSGDILFIPPMWLHTASPTGGVSVAVNVFFRSLPKGYAAGRDVYGNRDLQAYEKARIDIQKMVRSFDGLPSDISRFYLLRLAQELKDNAGV.

S-adenosyl-L-methionine contacts are provided by residues R69, G95, D122, 169–170 (DL), and E196. Residues 814–1003 (GRQYLRSISA…AAGRDVYGNR (190 aa)) form the JmjC domain.

It belongs to the methyltransferase superfamily. LCMT family.

The enzyme catalyses 7-[(3S)-3-amino-3-carboxypropyl]wyosine(37) in tRNA(Phe) + S-adenosyl-L-methionine = 7-[(3S)-(3-amino-3-methoxycarbonyl)propyl]wyosine(37) in tRNA(Phe) + S-adenosyl-L-homocysteine. It carries out the reaction 7-[(3S)-(3-amino-3-methoxycarbonyl)propyl]wyosine(37) in tRNA(Phe) + S-adenosyl-L-methionine + CO2 = wybutosine(37) in tRNA(Phe) + S-adenosyl-L-homocysteine + 2 H(+). The protein operates within tRNA modification; wybutosine-tRNA(Phe) biosynthesis. Probable S-adenosyl-L-methionine-dependent methyltransferase that acts as a component of the wybutosine biosynthesis pathway. Wybutosine is a hyper modified guanosine with a tricyclic base found at the 3'-position adjacent to the anticodon of eukaryotic phenylalanine tRNA. May methylate the carboxyl group of leucine residues to form alpha-leucine ester residues. The protein is tRNA wybutosine-synthesizing protein 4 (ppm2) of Aspergillus fumigatus (strain ATCC MYA-4609 / CBS 101355 / FGSC A1100 / Af293) (Neosartorya fumigata).